Reading from the N-terminus, the 269-residue chain is Protein tsct-1 (269 aa).

The protein belongs to the TSC-22/Dip/Bun family.

The polypeptide is Protein tsct-1 (Caenorhabditis elegans).